The primary structure comprises 378 residues: Histidinol-phosphate aminotransferase (378 aa).

A disordered region spans residues M1–G20. Positions E7–P17 are enriched in basic and acidic residues. Position 232 is an N6-(pyridoxal phosphate)lysine (K232).

This sequence belongs to the class-II pyridoxal-phosphate-dependent aminotransferase family. Histidinol-phosphate aminotransferase subfamily. Homodimer. Pyridoxal 5'-phosphate is required as a cofactor.

It catalyses the reaction L-histidinol phosphate + 2-oxoglutarate = 3-(imidazol-4-yl)-2-oxopropyl phosphate + L-glutamate. The protein operates within amino-acid biosynthesis; L-histidine biosynthesis; L-histidine from 5-phospho-alpha-D-ribose 1-diphosphate: step 7/9. This is Histidinol-phosphate aminotransferase from Azorhizobium caulinodans (strain ATCC 43989 / DSM 5975 / JCM 20966 / LMG 6465 / NBRC 14845 / NCIMB 13405 / ORS 571).